The following is a 26-amino-acid chain: Conotoxin Eb6.17 (26 aa).

2 cysteine pairs are disulfide-bonded: C7-C18 and C13-C25.

It belongs to the conotoxin O1 superfamily. In terms of tissue distribution, expressed by the venom duct.

The protein resides in the secreted. The polypeptide is Conotoxin Eb6.17 (E1) (Conus ebraeus (Hebrew cone)).